Here is a 433-residue protein sequence, read N- to C-terminus: 3-deoxy-D-manno-octulosonic acid transferase (433 aa).

A helical; Signal-anchor transmembrane segment spans residues 11–31; it reads TFLYDCFLIFAFMVGLPRILY. Residue Glu70 is the Proton acceptor of the active site. Residues 277–278, 317–319, and 344–347 each bind CMP; these read PR, IGW, and NLLE.

This sequence belongs to the glycosyltransferase group 1 family. Glycosyltransferase 30 subfamily.

It is found in the cell inner membrane. It catalyses the reaction lipid IVA (E. coli) + CMP-3-deoxy-beta-D-manno-octulosonate = alpha-Kdo-(2-&gt;6)-lipid IVA (E. coli) + CMP + H(+). The catalysed reaction is alpha-Kdo-(2-&gt;6)-lipid IVA (E. coli) + CMP-3-deoxy-beta-D-manno-octulosonate = alpha-Kdo-(2-&gt;4)-alpha-Kdo-(2-&gt;6)-lipid IVA (E. coli) + CMP + H(+). The enzyme catalyses alpha-Kdo-(2-&gt;4)-alpha-Kdo-(2-&gt;6)-lipid IVA (E. coli) + CMP-3-deoxy-beta-D-manno-octulosonate = alpha-Kdo-(2-&gt;8)-alpha-Kdo-(2-&gt;4)-alpha-Kdo-(2-&gt;6)-lipid IVA (E. coli) + CMP + H(+). It carries out the reaction alpha-Kdo-(2-&gt;8)-alpha-Kdo-(2-&gt;4)-alpha-Kdo-(2-&gt;6)-lipid IVA (E. coli) + CMP-3-deoxy-beta-D-manno-octulosonate = alpha-Kdo-(2-&gt;8)-[alpha-Kdo-(2-&gt;4)]-alpha-Kdo-(2-&gt;4)-alpha-Kdo-(2-&gt;6)-lipid IVA + CMP + H(+). It functions in the pathway bacterial outer membrane biogenesis; LPS core biosynthesis. Its function is as follows. Involved in lipopolysaccharide (LPS) biosynthesis. Catalyzes the transfer of predominantly four 3-deoxy-D-manno-octulosonate (Kdo) residues from CMP-Kdo to lipid IV(A), the tetraacyldisaccharide-1,4'-bisphosphate precursor of lipid A. Thus generates the genus-specific LPS epitope of Chlamydia, composed of the trisaccharide alpha-Kdo-(2-&gt;8)-alpha-Kdo-(2-&gt;4)-alpha-Kdo. The protein is 3-deoxy-D-manno-octulosonic acid transferase (waaA) of Chlamydophila psittaci (strain ATCC VR-125 / 6BC) (Chlamydia psittaci).